Reading from the N-terminus, the 550-residue chain is Aspartate--tRNA ligase (550 aa).

Glu162 is a binding site for L-aspartate. The tract at residues 186–189 (QIYK) is aspartate. Arg208 contacts L-aspartate. Residues 208-210 (RDE) and Gln217 each bind ATP. Residue His417 coordinates L-aspartate. Glu451 contributes to the ATP binding site. Residue Arg458 participates in L-aspartate binding. Position 499–502 (499–502 (GIDR)) interacts with ATP.

This sequence belongs to the class-II aminoacyl-tRNA synthetase family. Type 1 subfamily. In terms of assembly, homodimer.

It localises to the cytoplasm. It catalyses the reaction tRNA(Asp) + L-aspartate + ATP = L-aspartyl-tRNA(Asp) + AMP + diphosphate. Catalyzes the attachment of L-aspartate to tRNA(Asp) in a two-step reaction: L-aspartate is first activated by ATP to form Asp-AMP and then transferred to the acceptor end of tRNA(Asp). This is Aspartate--tRNA ligase from Mycoplasma genitalium (strain ATCC 33530 / DSM 19775 / NCTC 10195 / G37) (Mycoplasmoides genitalium).